Reading from the N-terminus, the 342-residue chain is Holliday junction branch migration complex subunit RuvB (342 aa).

Residues 1–185 (MRKDYLNSNK…FGINTRLAYY (185 aa)) are large ATPase domain (RuvB-L). Residues Leu-24, Arg-25, Gly-66, Lys-69, Thr-70, Thr-71, 132–134 (EDF), Arg-175, Tyr-185, and Arg-222 contribute to the ATP site. Thr-70 is a binding site for Mg(2+). Residues 186–256 (DVTLLTQIVK…IAQMALKALD (71 aa)) are small ATPAse domain (RuvB-S). The tract at residues 259-342 (EDGLDEMDNR…PPQRAGTLFE (84 aa)) is head domain (RuvB-H). Arg-314 and Arg-319 together coordinate DNA.

The protein belongs to the RuvB family. In terms of assembly, homohexamer. Forms an RuvA(8)-RuvB(12)-Holliday junction (HJ) complex. HJ DNA is sandwiched between 2 RuvA tetramers; dsDNA enters through RuvA and exits via RuvB. An RuvB hexamer assembles on each DNA strand where it exits the tetramer. Each RuvB hexamer is contacted by two RuvA subunits (via domain III) on 2 adjacent RuvB subunits; this complex drives branch migration. In the full resolvosome a probable DNA-RuvA(4)-RuvB(12)-RuvC(2) complex forms which resolves the HJ.

It is found in the cytoplasm. It carries out the reaction ATP + H2O = ADP + phosphate + H(+). In terms of biological role, the RuvA-RuvB-RuvC complex processes Holliday junction (HJ) DNA during genetic recombination and DNA repair, while the RuvA-RuvB complex plays an important role in the rescue of blocked DNA replication forks via replication fork reversal (RFR). RuvA specifically binds to HJ cruciform DNA, conferring on it an open structure. The RuvB hexamer acts as an ATP-dependent pump, pulling dsDNA into and through the RuvAB complex. RuvB forms 2 homohexamers on either side of HJ DNA bound by 1 or 2 RuvA tetramers; 4 subunits per hexamer contact DNA at a time. Coordinated motions by a converter formed by DNA-disengaged RuvB subunits stimulates ATP hydrolysis and nucleotide exchange. Immobilization of the converter enables RuvB to convert the ATP-contained energy into a lever motion, pulling 2 nucleotides of DNA out of the RuvA tetramer per ATP hydrolyzed, thus driving DNA branch migration. The RuvB motors rotate together with the DNA substrate, which together with the progressing nucleotide cycle form the mechanistic basis for DNA recombination by continuous HJ branch migration. Branch migration allows RuvC to scan DNA until it finds its consensus sequence, where it cleaves and resolves cruciform DNA. This chain is Holliday junction branch migration complex subunit RuvB, found in Amoebophilus asiaticus (strain 5a2).